The following is a 354-amino-acid chain: Protein-glutamate methylesterase/protein-glutamine glutaminase 2 (354 aa).

Residues 3 to 120 (RVVVVDDSMS…PADLADYARD (118 aa)) enclose the Response regulatory domain. Aspartate 54 carries the post-translational modification 4-aspartylphosphate. The CheB-type methylesterase domain occupies 164 to 354 (ATRLSRVIAI…MGARLSEALQ (191 aa)). Active-site residues include serine 176, histidine 202, and aspartate 298.

This sequence belongs to the CheB family. In terms of processing, phosphorylated by CheA. Phosphorylation of the N-terminal regulatory domain activates the methylesterase activity.

It is found in the cytoplasm. The enzyme catalyses [protein]-L-glutamate 5-O-methyl ester + H2O = L-glutamyl-[protein] + methanol + H(+). The catalysed reaction is L-glutaminyl-[protein] + H2O = L-glutamyl-[protein] + NH4(+). Involved in chemotaxis. Part of a chemotaxis signal transduction system that modulates chemotaxis in response to various stimuli. Catalyzes the demethylation of specific methylglutamate residues introduced into the chemoreceptors (methyl-accepting chemotaxis proteins or MCP) by CheR. Also mediates the irreversible deamidation of specific glutamine residues to glutamic acid. The chain is Protein-glutamate methylesterase/protein-glutamine glutaminase 2 from Burkholderia thailandensis (strain ATCC 700388 / DSM 13276 / CCUG 48851 / CIP 106301 / E264).